The following is a 255-amino-acid chain: Putative cysteine-rich repeat secretory protein 10 (255 aa).

The first 26 residues, 1–26 (MFSSSVSISILVVVAMQFSFIHNVLS), serve as a signal peptide directing secretion. Gnk2-homologous domains are found at residues 33–134 (YLQH…EIYT) and 140–252 (FKHY…LYPF).

Belongs to the cysteine-rich repeat secretory protein family.

The protein localises to the secreted. This Arabidopsis thaliana (Mouse-ear cress) protein is Putative cysteine-rich repeat secretory protein 10 (CRRSP10).